The following is a 296-amino-acid chain: uncharacterized protein (296 aa).

The FAD-binding FR-type domain occupies 1-95; the sequence is MYKIVSKKEL…VGPLGVPSEF (95 aa).

This is an uncharacterized protein from Clostridium beijerinckii (Clostridium MP).